Reading from the N-terminus, the 79-residue chain is MMKKLLLTLIKLYRILISPLFPPSCRFQPTCSQYALDAVEIHGVWRGSCLALKRILRCHPLHPGGYDPVPNPEQGKISS.

It belongs to the UPF0161 family.

The protein localises to the cell inner membrane. Could be involved in insertion of integral membrane proteins into the membrane. The sequence is that of Putative membrane protein insertion efficiency factor from Synechocystis sp. (strain ATCC 27184 / PCC 6803 / Kazusa).